Consider the following 198-residue polypeptide: Na(+)-translocating NADH-quinone reductase subunit E (198 aa).

Helical transmembrane passes span Ser11–Val31, Val35–Val55, Phe77–Ile97, Gly110–Val130, Val140–Leu160, and Leu176–Ile196.

The protein belongs to the NqrDE/RnfAE family. As to quaternary structure, composed of six subunits; NqrA, NqrB, NqrC, NqrD, NqrE and NqrF.

The protein resides in the cell inner membrane. It catalyses the reaction a ubiquinone + n Na(+)(in) + NADH + H(+) = a ubiquinol + n Na(+)(out) + NAD(+). NQR complex catalyzes the reduction of ubiquinone-1 to ubiquinol by two successive reactions, coupled with the transport of Na(+) ions from the cytoplasm to the periplasm. NqrA to NqrE are probably involved in the second step, the conversion of ubisemiquinone to ubiquinol. The protein is Na(+)-translocating NADH-quinone reductase subunit E of Haemophilus ducreyi (strain 35000HP / ATCC 700724).